The chain runs to 541 residues: Chaperonin GroEL 5 (541 aa).

ATP is bound by residues 30-33 (TLGP), Gly415, and Asp496.

This sequence belongs to the chaperonin (HSP60) family. Forms a cylinder of 14 subunits composed of two heptameric rings stacked back-to-back. Interacts with the co-chaperonin GroES.

The protein resides in the cytoplasm. The enzyme catalyses ATP + H2O + a folded polypeptide = ADP + phosphate + an unfolded polypeptide.. Together with its co-chaperonin GroES, plays an essential role in assisting protein folding. The GroEL-GroES system forms a nano-cage that allows encapsulation of the non-native substrate proteins and provides a physical environment optimized to promote and accelerate protein folding. The sequence is that of Chaperonin GroEL 5 from Bradyrhizobium diazoefficiens (strain JCM 10833 / BCRC 13528 / IAM 13628 / NBRC 14792 / USDA 110).